The sequence spans 130 residues: Small ribosomal subunit protein uS9 (130 aa).

The interval 106–130 (RDSRKVERKKPGLKKARKASQFSKR) is disordered. Basic residues predominate over residues 111–130 (VERKKPGLKKARKASQFSKR).

The protein belongs to the universal ribosomal protein uS9 family.

This chain is Small ribosomal subunit protein uS9, found in Streptococcus pneumoniae serotype 2 (strain D39 / NCTC 7466).